Consider the following 310-residue polypeptide: Phytoene synthase 2, chloroplastic (310 aa).

Residues 1–25 constitute a chloroplast transit peptide; the sequence is DPDIVLPGNLGLLSEAYDRCGEVCA.

This sequence belongs to the phytoene/squalene synthase family. In terms of assembly, monomer.

It localises to the plastid. Its subcellular location is the chloroplast. It carries out the reaction 2 (2E,6E,10E)-geranylgeranyl diphosphate = 15-cis-phytoene + 2 diphosphate. It participates in carotenoid biosynthesis; phytoene biosynthesis; all-trans-phytoene from geranylgeranyl diphosphate: step 1/1. Its function is as follows. Catalyzes the reaction from prephytoene diphosphate to phytoene. This chain is Phytoene synthase 2, chloroplastic (PSY2), found in Solanum lycopersicum (Tomato).